The following is a 388-amino-acid chain: FFFFKAHKARVGARTSFLTEMERGSRDHHRDHRDHREHRETREPPTLAFHMKSWKTINKSLKAFAKLLKENATVTFTPQPSIIIQSAKNHLVQKLTIQAECLFLSDTDRFLTKTINNHIPLFESFMNIISNPEVTKMYIQHDSDLYTRVLVTASDTCTQASVPCVHGQEVVRDTGRSPLRIDLDHSTVSDVLKWLSPVTKTKRSGKSDALMAHIIVQVNPPTIKFVTEMNELEFSNSNKVIFYDVKNMRFNLSAKNLQQALSMCAVIKTSCSLRTVAAKDCKLILTSKSTLLTVEAFLTQEQLKEESRFERMGKQDDGKGDRSHKNEDGSALASKQEMQYEITNYMVPAKNGTAGSSLFNEKEDSESDDSMHFDYSSNPNPKRQRCVV.

2 disordered regions span residues Glu20–Pro44 and Glu306–Val388. Positions Arg26–Arg36 are enriched in basic residues. A compositionally biased stretch (basic and acidic residues) spans Glu306 to Asp328.

It belongs to the herpesviridae polymerase accessory protein family.

In terms of biological role, accessory subunit of the DNA polymerase that acts to increase the processivity of polymerization. This Homo sapiens (Human) protein is DNA polymerase processivity factor (U27).